The sequence spans 525 residues: Serine protease 1 (525 aa).

An N-terminal signal peptide occupies residues 1–32; the sequence is MKCKKPSALFSALALVGALGAASVLGAASANS. A propeptide spanning residues 33-211 is cleaved from the precursor; sequence ASPVAAATVQ…TVSDDVIVPV (179 aa). An intrachain disulfide couples Cys-223 to Cys-239. Catalysis depends on charge relay system residues His-238 and Asp-270. Cystine bridges form between Cys-310/Cys-320, Cys-346/Cys-376, Cys-412/Cys-431, Cys-453/Cys-472, and Cys-496/Cys-514. Ser-352 (charge relay system) is an active-site residue. The 130-residue stretch at 396–525 folds into the Ricin B-type lectin domain; sequence TSTDVTTSYV…GGANQKWWRR (130 aa). The essential for the lytic activity, but not for protease function stretch occupies residues 401–525; it reads TTSYVQGYQN…GGANQKWWRR (125 aa).

This sequence belongs to the peptidase S1 family.

The protein resides in the secreted. Major serine protease exhibiting lytic activity toward living yeast cells. Similar to elastase in its substrate specificity and has a lectin-like affinity for mannose. Mannoproteins may be the native substrate for RPI. The sequence is that of Serine protease 1 from Rarobacter faecitabidus.